The sequence spans 154 residues: Universal stress protein Sll1388 (154 aa).

The protein belongs to the universal stress protein A family.

The polypeptide is Universal stress protein Sll1388 (Synechocystis sp. (strain ATCC 27184 / PCC 6803 / Kazusa)).